We begin with the raw amino-acid sequence, 85 residues long: Conotoxin Lt28.4 (85 aa).

An N-terminal signal peptide occupies residues 1 to 21 (MPKLEMMLLVLLILPLCYIDA). Residues 22–40 (VGPPPPWNMEDEIIEHWQK) constitute a propeptide that is removed on maturation.

The protein belongs to the conotoxin D superfamily. Post-translationally, contains 5 disulfide bonds. In terms of tissue distribution, expressed by the venom duct.

It localises to the secreted. Functionally, probable neurotoxin. The sequence is that of Conotoxin Lt28.4 from Conus litteratus (Lettered cone).